The sequence spans 195 residues: Dephospho-CoA kinase (195 aa).

Positions 3–195 (IIGLTGSIAM…FSIIENLLKN (193 aa)) constitute a DPCK domain. 11-16 (AMGKST) contacts ATP.

It belongs to the CoaE family.

The protein localises to the cytoplasm. It catalyses the reaction 3'-dephospho-CoA + ATP = ADP + CoA + H(+). It participates in cofactor biosynthesis; coenzyme A biosynthesis; CoA from (R)-pantothenate: step 5/5. Functionally, catalyzes the phosphorylation of the 3'-hydroxyl group of dephosphocoenzyme A to form coenzyme A. This Bartonella quintana (strain Toulouse) (Rochalimaea quintana) protein is Dephospho-CoA kinase.